A 973-amino-acid chain; its full sequence is Probable outer membrane protein pmp13 (973 aa).

A signal peptide spans 1–24; it reads MKTSIRKFLISTTLAPCFASTAFT. Over residues 284–293 the composition is skewed to polar residues; the sequence is QNNTASPQNS. The segment at 284 to 303 is disordered; sequence QNNTASPQNSLPAPTPPPTP. One can recognise an Autotransporter domain in the interval 691–973; the sequence is EDVPGKQLSI…TLDIGSKLRF (283 aa).

The protein belongs to the PMP outer membrane protein family.

It is found in the secreted. The protein resides in the cell wall. It localises to the cell outer membrane. This Chlamydia pneumoniae (Chlamydophila pneumoniae) protein is Probable outer membrane protein pmp13 (pmp13).